Consider the following 300-residue polypeptide: 4-hydroxy-tetrahydrodipicolinate synthase (300 aa).

Position 57 (Thr57) interacts with pyruvate. Tyr145 (proton donor/acceptor) is an active-site residue. Catalysis depends on Lys173, which acts as the Schiff-base intermediate with substrate. Ile213 lines the pyruvate pocket.

The protein belongs to the DapA family. In terms of assembly, homotetramer; dimer of dimers.

Its subcellular location is the cytoplasm. The enzyme catalyses L-aspartate 4-semialdehyde + pyruvate = (2S,4S)-4-hydroxy-2,3,4,5-tetrahydrodipicolinate + H2O + H(+). It participates in amino-acid biosynthesis; L-lysine biosynthesis via DAP pathway; (S)-tetrahydrodipicolinate from L-aspartate: step 3/4. Functionally, catalyzes the condensation of (S)-aspartate-beta-semialdehyde [(S)-ASA] and pyruvate to 4-hydroxy-tetrahydrodipicolinate (HTPA). The protein is 4-hydroxy-tetrahydrodipicolinate synthase of Corynebacterium urealyticum (strain ATCC 43042 / DSM 7109).